We begin with the raw amino-acid sequence, 373 residues long: Peptide chain release factor 2 (373 aa).

Glutamine 252 bears the N5-methylglutamine mark.

It belongs to the prokaryotic/mitochondrial release factor family. In terms of processing, methylated by PrmC. Methylation increases the termination efficiency of RF2.

It is found in the cytoplasm. Its function is as follows. Peptide chain release factor 2 directs the termination of translation in response to the peptide chain termination codons UGA and UAA. The sequence is that of Peptide chain release factor 2 from Staphylococcus saprophyticus subsp. saprophyticus (strain ATCC 15305 / DSM 20229 / NCIMB 8711 / NCTC 7292 / S-41).